A 102-amino-acid polypeptide reads, in one-letter code: Co-chaperonin GroES (102 aa).

The protein belongs to the GroES chaperonin family. Heptamer of 7 subunits arranged in a ring. Interacts with the chaperonin GroEL.

The protein localises to the cytoplasm. Its function is as follows. Together with the chaperonin GroEL, plays an essential role in assisting protein folding. The GroEL-GroES system forms a nano-cage that allows encapsulation of the non-native substrate proteins and provides a physical environment optimized to promote and accelerate protein folding. GroES binds to the apical surface of the GroEL ring, thereby capping the opening of the GroEL channel. In Streptomyces griseus subsp. griseus (strain JCM 4626 / CBS 651.72 / NBRC 13350 / KCC S-0626 / ISP 5235), this protein is Co-chaperonin GroES.